The primary structure comprises 221 residues: Ependymin (221 aa).

An N-terminal signal peptide occupies residues 1–21 (MQAFAVAALSIWLCLGATTLA). 3 N-linked (GlcNAc...) asparagine glycosylation sites follow: Asn37, Asn77, and Asn101.

Belongs to the ependymin family. As to quaternary structure, forms disulfide-linked dimers. In terms of processing, binds calcium through the terminal sialic acids. In terms of tissue distribution, EPDs are synthesized in the meninx and secreted in the cerebrospinal fluid.

It is found in the secreted. Its function is as follows. May play a role in neural plasticity. May be involved during axon regeneration. The protein is Ependymin (epd) of Esox lucius (Northern pike).